The primary structure comprises 162 residues: Calcium-binding protein 4b (162 aa).

EF-hand domains lie at 10–45 (ELTN…CKYP), 46–81 (NPTL…DYII), 85–120 (TCLK…SGSN), and 123–158 (QAKV…YFEI). 10 residues coordinate Ca(2+): aspartate 23, asparagine 25, aspartate 27, glutamine 29, glutamate 34, aspartate 59, aspartate 61, aspartate 63, lysine 65, and glutamate 70. Ca(2+)-binding residues include aspartate 136, aspartate 138, aspartate 140, cysteine 142, and glutamate 147.

The sequence is that of Calcium-binding protein 4b (cbpD2) from Dictyostelium discoideum (Social amoeba).